Consider the following 379-residue polypeptide: L-lactate dehydrogenase (379 aa).

In terms of domain architecture, FMN hydroxy acid dehydrogenase spans 1–379; the sequence is MIISASTDYR…LSRDSLVKIP (379 aa). A substrate-binding site is contributed by Tyr24. FMN contacts are provided by Ser106 and Gln127. Tyr129 contributes to the substrate binding site. Thr155 is an FMN binding site. Arg164 is a binding site for substrate. Lys251 provides a ligand contact to FMN. His275 functions as the Proton acceptor in the catalytic mechanism. Substrate is bound at residue Arg278. Position 306 to 330 (306 to 330) interacts with FMN; sequence DSGIRTGLDVVRMLALGADCTLLGR.

Belongs to the FMN-dependent alpha-hydroxy acid dehydrogenase family. FMN serves as cofactor.

The protein resides in the cell inner membrane. The enzyme catalyses (S)-lactate + A = pyruvate + AH2. In terms of biological role, catalyzes the conversion of L-lactate to pyruvate. Is coupled to the respiratory chain. The protein is L-lactate dehydrogenase of Vibrio parahaemolyticus serotype O3:K6 (strain RIMD 2210633).